A 621-amino-acid polypeptide reads, in one-letter code: Zinc metalloproteinase-disintegrin-like TSV-DM (621 aa).

The signal sequence occupies residues 1–20 (MIQVLLVTICLAVFPYQGSS). A propeptide spanning residues 21–191 (IILESGNVND…EASQSNLTPE (171 aa)) is cleaved from the precursor. Glutamine 192 carries the pyrrolidone carboxylic acid modification. A Peptidase M12B domain is found at 200 to 396 (KYVKFFLVAD…NMPQCILKKP (197 aa)). Asparagine 219 carries an N-linked (GlcNAc...) asparagine glycan. 3 cysteine pairs are disulfide-bonded: cysteine 311–cysteine 391, cysteine 351–cysteine 375, and cysteine 353–cysteine 358. Histidine 336 contacts Zn(2+). Glutamate 337 is a catalytic residue. Residues histidine 340 and histidine 346 each coordinate Zn(2+). The 86-residue stretch at 404 to 489 (PPVCGNYFVE…AECTDRFQRN (86 aa)) folds into the Disintegrin domain. Positions 406, 409, 411, 413, 416, and 419 each coordinate Ca(2+). Intrachain disulfides connect cysteine 407–cysteine 436, cysteine 418–cysteine 431, cysteine 420–cysteine 426, cysteine 430–cysteine 453, cysteine 444–cysteine 450, cysteine 449–cysteine 475, cysteine 462–cysteine 482, cysteine 469–cysteine 500, cysteine 493–cysteine 505, cysteine 512–cysteine 562, cysteine 527–cysteine 573, cysteine 540–cysteine 550, cysteine 557–cysteine 599, and cysteine 593–cysteine 605. Residues 468 to 470 (ECD) carry the D/ECD-tripeptide motif. Positions 470, 471, 473, 484, and 485 each coordinate Ca(2+). Asparagine 502 is a glycosylation site (N-linked (GlcNAc...) asparagine).

It belongs to the venom metalloproteinase (M12B) family. P-III subfamily. P-IIIc sub-subfamily. As to quaternary structure, homodimer; disulfide-linked. The cofactor is Zn(2+). In terms of processing, the N-terminus is blocked. In terms of tissue distribution, expressed by the venom gland.

The protein localises to the secreted. Inhibited by EDTA and DTT, and partially inhibited by EGTA, but not inhibited by PMSF and NEM. In terms of biological role, snake venom zinc metalloprotease that hydrolyzes the alpha-chain (FGA) and more slowly the beta-chain (FGB) of fibrinogen. Inhibits cell proliferation and induces cell morphologic changes transiently on human umbilical vein endothelial cells. The protein is Zinc metalloproteinase-disintegrin-like TSV-DM of Trimeresurus stejnegeri (Chinese green tree viper).